Consider the following 306-residue polypeptide: Glutaminase (306 aa).

Residues serine 64, asparagine 115, glutamate 159, asparagine 166, tyrosine 190, tyrosine 242, and valine 260 each coordinate substrate.

This sequence belongs to the glutaminase family. In terms of assembly, homotetramer.

It catalyses the reaction L-glutamine + H2O = L-glutamate + NH4(+). The chain is Glutaminase from Aeromonas hydrophila subsp. hydrophila (strain ATCC 7966 / DSM 30187 / BCRC 13018 / CCUG 14551 / JCM 1027 / KCTC 2358 / NCIMB 9240 / NCTC 8049).